Reading from the N-terminus, the 23-residue chain is DAAQVPDFATAVQNLXHTLSEAA.

It belongs to the insect apolipophorin-3 family. Equilibrium between a soluble monomer and a bound lipoprotein form. Apolipophorin-3 associates with lipophorin during lipid loading until each particle contains 9 or 14 molecules of apolipophorin-3. As to expression, hemolymph.

The protein localises to the secreted. In terms of biological role, assists in the loading of diacylglycerol, generated from triacylglycerol stores in the fat body through the action of adipokinetic hormone, into lipophorin, the hemolymph lipoprotein. It increases the lipid carrying capacity of lipophorin by covering the expanding hydrophobic surface resulting from diacylglycerol uptake. It thus plays a critical role in the transport of lipids during flight in several species of insects. The polypeptide is Apolipophorin-3 (Melanoplus sanguinipes (Migratory grasshopper)).